The primary structure comprises 167 residues: MLGLVSFDATFFFQLANTLIMFLILKHFLFQPVTEFMDKRTKAIEESIAEAELKNKESNELKAQYESKLTEIKKERTQIIDEAVRNAQKRGDEIVSAAGVEARRTIEKATAEIEREKQKMMNELKGEISQLAIAAAQKVIEKDLDQSAHQQMIQQFIDKAGETQWQN.

A helical membrane pass occupies residues 10-30; sequence TFFFQLANTLIMFLILKHFLF.

The protein belongs to the ATPase B chain family. As to quaternary structure, F-type ATPases have 2 components, F(1) - the catalytic core - and F(0) - the membrane proton channel. F(1) has five subunits: alpha(3), beta(3), gamma(1), delta(1), epsilon(1). F(0) has three main subunits: a(1), b(2) and c(10-14). The alpha and beta chains form an alternating ring which encloses part of the gamma chain. F(1) is attached to F(0) by a central stalk formed by the gamma and epsilon chains, while a peripheral stalk is formed by the delta and b chains.

The protein localises to the cell membrane. In terms of biological role, f(1)F(0) ATP synthase produces ATP from ADP in the presence of a proton or sodium gradient. F-type ATPases consist of two structural domains, F(1) containing the extramembraneous catalytic core and F(0) containing the membrane proton channel, linked together by a central stalk and a peripheral stalk. During catalysis, ATP synthesis in the catalytic domain of F(1) is coupled via a rotary mechanism of the central stalk subunits to proton translocation. Component of the F(0) channel, it forms part of the peripheral stalk, linking F(1) to F(0). The chain is ATP synthase subunit b from Alkaliphilus oremlandii (strain OhILAs) (Clostridium oremlandii (strain OhILAs)).